The primary structure comprises 184 residues: Elongation factor P (184 aa).

This sequence belongs to the elongation factor P family.

It localises to the cytoplasm. The protein operates within protein biosynthesis; polypeptide chain elongation. In terms of biological role, involved in peptide bond synthesis. Stimulates efficient translation and peptide-bond synthesis on native or reconstituted 70S ribosomes in vitro. Probably functions indirectly by altering the affinity of the ribosome for aminoacyl-tRNA, thus increasing their reactivity as acceptors for peptidyl transferase. The chain is Elongation factor P from Thermus thermophilus (strain ATCC BAA-163 / DSM 7039 / HB27).